Here is a 274-residue protein sequence, read N- to C-terminus: Large ribosomal subunit protein uL2 (274 aa).

A disordered region spans residues 224 to 274; sequence VMNPVDHPHGGGEGRSPIGRNPVTPWGKPALGARTRKKKPGDRLIVKRRAR. Basic residues predominate over residues 257–274; sequence RTRKKKPGDRLIVKRRAR.

Belongs to the universal ribosomal protein uL2 family. Part of the 50S ribosomal subunit. Forms a bridge to the 30S subunit in the 70S ribosome.

Functionally, one of the primary rRNA binding proteins. Required for association of the 30S and 50S subunits to form the 70S ribosome, for tRNA binding and peptide bond formation. It has been suggested to have peptidyltransferase activity; this is somewhat controversial. Makes several contacts with the 16S rRNA in the 70S ribosome. This is Large ribosomal subunit protein uL2 from Pelotomaculum thermopropionicum (strain DSM 13744 / JCM 10971 / SI).